Consider the following 218-residue polypeptide: Peptide methionine sulfoxide reductase MsrA (218 aa).

The active site involves Cys57.

This sequence belongs to the MsrA Met sulfoxide reductase family.

It catalyses the reaction L-methionyl-[protein] + [thioredoxin]-disulfide + H2O = L-methionyl-(S)-S-oxide-[protein] + [thioredoxin]-dithiol. The catalysed reaction is [thioredoxin]-disulfide + L-methionine + H2O = L-methionine (S)-S-oxide + [thioredoxin]-dithiol. Functionally, has an important function as a repair enzyme for proteins that have been inactivated by oxidation. Catalyzes the reversible oxidation-reduction of methionine sulfoxide in proteins to methionine. The protein is Peptide methionine sulfoxide reductase MsrA of Brucella melitensis biotype 2 (strain ATCC 23457).